Consider the following 592-residue polypeptide: MTAEDAAAAMSSDSAAGGAASAKAPEGVAGAPNEAALLALLARTGYRMVQENGQRKYGGPPPGWEGPHPQRGCEVFVGKIPRDVYEDELVPVFEAVGRIYELRLMMDFDGKNRGYAFVTYCHKGEAKRAVRELNNHEIRPGRLLGVCCSVDNCRLFIGGIPKMKKREEILEEIAKVTEGVLDVIVYASAADKMKNRGFAFVEYESHRAAAMARRKLMPGRIQLWGHQIAVDWAEPEIDVDEDVMETVKILYVRNLMIETTEDTIKKSFGQFNPGCVERVKKIRDYAFVHFASREDAVLAMNSLNGTELEGSCLEVTLAKPVDKEQYSRYQKAAKGGGAAEAAAPQPGYVYSCDPYTLAYYGYPYNALIGPNRDYFVKAGSIRGRGRGAAGSRAPGPRGSYLGGYSAGRGIYSRYHEGKGKQQEKGYELVPNLEISAVNPVAIKPGTVAIPAIGAQYSMFQAAPAPKMIEDGKIHTMEHMISPIAVQPDPASAAAAAAAAAAAVIPAVSTPPPFQGRPITPVYTVAPNVQRIPAAGLYGAGYVPFAAPATATLATLQKNAAAAAVYGGYAGYIPQAFPAATIQVPIHDVYPTY.

Residues methionine 1–alanine 24 are compositionally biased toward low complexity. The segment at methionine 1–glutamate 26 is disordered. RRM domains lie at cysteine 73 to aspartate 151, cysteine 153 to proline 235, and lysine 248 to proline 320. Arginine 397 and arginine 408 each carry asymmetric dimethylarginine; alternate. Residues arginine 397 and arginine 408 each carry the omega-N-methylarginine; alternate modification.

It belongs to the RRM RBM47 family. In terms of assembly, homodimer. Interacts with A1CF. Interacts with APOBEC1; form an mRNA editing complex. Interacts with RBPMS.

It localises to the nucleus. Its subcellular location is the cytoplasm. Functionally, single-stranded RNA-binding protein that functions in a variety of RNA processes, including alternative splicing, RNA stabilization, and RNA editing. Functions as an enzyme-substrate adapter for the cytidine deaminase APOBEC1. With APOBEC1 forms an mRNA editing complex involved into cytidine to uridine editing of a variety of mRNA molecules. Through the binding of their 3'UTR, also stabilizes a variety of mRNAs and regulates the expression of genes such as the interferon alpha/beta receptor and interleukin-10. Also involved in the alternative splicing of several genes including TJP1. Binds the pre-mRNA (U)GCAUG consensus sequences in downstream intronic regions of alternative exons, regulating their exclusion and inclusion into mRNAs. Independently of its RNA-binding activity, could negatively regulate MAVS by promoting its lysosomal degradation. The protein is RNA-binding protein 47 of Canis lupus familiaris (Dog).